Here is a 601-residue protein sequence, read N- to C-terminus: Probable HECT-type ubiquitin ligase-interacting protein creD (601 aa).

Disordered regions lie at residues 374-397 (EVDP…GTLS) and 454-496 (VSTD…GMAT). Residues 455–473 (STDSFGPSSGSNSQSPASP) show a composition bias toward low complexity. A compositionally biased stretch (basic and acidic residues) spans 475–489 (LSRRPSDEGYHDHDY).

The protein belongs to the arrestin family. As to quaternary structure, interacts with hulA.

In terms of biological role, component of the regulatory network controlling carbon source utilization through ubiquitination and deubiquitination involving creA, creB, creC, creD and acrB. May be involved in signaling by recognizing appropriately phosphorylated substrates via its arrestin domains and then recruit a HECT-type ubiquitin ligase such as hulA, leading to ubiquitination of the substrate, providing a link between ubiquitination and phosphorylation in protein regulation and stability. The polypeptide is Probable HECT-type ubiquitin ligase-interacting protein creD (creD) (Aspergillus fumigatus (strain CBS 144.89 / FGSC A1163 / CEA10) (Neosartorya fumigata)).